The sequence spans 165 residues: UPF0303 protein Bamb_1459 (165 aa).

The protein belongs to the UPF0303 family.

The chain is UPF0303 protein Bamb_1459 from Burkholderia ambifaria (strain ATCC BAA-244 / DSM 16087 / CCUG 44356 / LMG 19182 / AMMD) (Burkholderia cepacia (strain AMMD)).